The sequence spans 314 residues: Porphobilinogen deaminase (314 aa).

The residue at position 243 (Cys243) is an S-(dipyrrolylmethanemethyl)cysteine.

The protein belongs to the HMBS family. In terms of assembly, monomer. It depends on dipyrromethane as a cofactor.

The catalysed reaction is 4 porphobilinogen + H2O = hydroxymethylbilane + 4 NH4(+). The protein operates within porphyrin-containing compound metabolism; protoporphyrin-IX biosynthesis; coproporphyrinogen-III from 5-aminolevulinate: step 2/4. Tetrapolymerization of the monopyrrole PBG into the hydroxymethylbilane pre-uroporphyrinogen in several discrete steps. This chain is Porphobilinogen deaminase, found in Bordetella bronchiseptica (strain ATCC BAA-588 / NCTC 13252 / RB50) (Alcaligenes bronchisepticus).